Consider the following 167-residue polypeptide: Thioredoxin M-type, chloroplastic (167 aa).

The transit peptide at 1-53 directs the protein to the chloroplast; the sequence is MAMETCFRAWALHAPAGSKDRLLVGNLVLPSKRALAPLSVGRVATRRPRHVCQ. The Thioredoxin domain occupies 54-165; the sequence is SKNAVDEVVV…LTTLIDKYIG (112 aa). A disulfide bridge connects residues Cys89 and Cys92.

This sequence belongs to the thioredoxin family. Plant M-type subfamily. As to quaternary structure, forms a complex with heterodimeric ferredoxin-thioredoxin reductase (FTR) and ferredoxin.

The protein resides in the plastid. It localises to the chloroplast. Participates in various redox reactions through the reversible oxidation of the active center dithiol to a disulfide. The M form is known to activate NADP-malate dehydrogenase. The sequence is that of Thioredoxin M-type, chloroplastic (TRM1) from Zea mays (Maize).